Reading from the N-terminus, the 179-residue chain is Large ribosomal subunit protein uL6 (179 aa).

Belongs to the universal ribosomal protein uL6 family. Part of the 50S ribosomal subunit.

Functionally, this protein binds to the 23S rRNA, and is important in its secondary structure. It is located near the subunit interface in the base of the L7/L12 stalk, and near the tRNA binding site of the peptidyltransferase center. In Herpetosiphon aurantiacus (strain ATCC 23779 / DSM 785 / 114-95), this protein is Large ribosomal subunit protein uL6.